A 280-amino-acid chain; its full sequence is Phosphatidylserine decarboxylase proenzyme (280 aa).

Residues Asp-88, His-144, and Ser-247 each act as charge relay system; for autoendoproteolytic cleavage activity in the active site. Residue Ser-247 is the Schiff-base intermediate with substrate; via pyruvic acid; for decarboxylase activity of the active site. Residue Ser-247 is modified to Pyruvic acid (Ser); by autocatalysis.

This sequence belongs to the phosphatidylserine decarboxylase family. PSD-B subfamily. Prokaryotic type I sub-subfamily. In terms of assembly, heterodimer of a large membrane-associated beta subunit and a small pyruvoyl-containing alpha subunit. Pyruvate serves as cofactor. Post-translationally, is synthesized initially as an inactive proenzyme. Formation of the active enzyme involves a self-maturation process in which the active site pyruvoyl group is generated from an internal serine residue via an autocatalytic post-translational modification. Two non-identical subunits are generated from the proenzyme in this reaction, and the pyruvate is formed at the N-terminus of the alpha chain, which is derived from the carboxyl end of the proenzyme. The autoendoproteolytic cleavage occurs by a canonical serine protease mechanism, in which the side chain hydroxyl group of the serine supplies its oxygen atom to form the C-terminus of the beta chain, while the remainder of the serine residue undergoes an oxidative deamination to produce ammonia and the pyruvoyl prosthetic group on the alpha chain. During this reaction, the Ser that is part of the protease active site of the proenzyme becomes the pyruvoyl prosthetic group, which constitutes an essential element of the active site of the mature decarboxylase.

It is found in the cell membrane. The enzyme catalyses a 1,2-diacyl-sn-glycero-3-phospho-L-serine + H(+) = a 1,2-diacyl-sn-glycero-3-phosphoethanolamine + CO2. It participates in phospholipid metabolism; phosphatidylethanolamine biosynthesis; phosphatidylethanolamine from CDP-diacylglycerol: step 2/2. Functionally, catalyzes the formation of phosphatidylethanolamine (PtdEtn) from phosphatidylserine (PtdSer). This chain is Phosphatidylserine decarboxylase proenzyme, found in Stenotrophomonas maltophilia (strain R551-3).